A 66-amino-acid polypeptide reads, in one-letter code: Small ribosomal subunit protein eS27 (66 aa).

Cysteine 21, cysteine 24, cysteine 40, and cysteine 43 together coordinate Zn(2+). Residues 21–43 (CPVCGNEQVIFSHATFPARCLVC) form a C4-type zinc finger.

Belongs to the eukaryotic ribosomal protein eS27 family. Part of the 30S ribosomal subunit. It depends on Zn(2+) as a cofactor.

The protein is Small ribosomal subunit protein eS27 of Hyperthermus butylicus (strain DSM 5456 / JCM 9403 / PLM1-5).